We begin with the raw amino-acid sequence, 299 residues long: Acetylglutamate kinase (299 aa).

Substrate-binding positions include 72-73 (GG), arginine 94, and asparagine 196.

Belongs to the acetylglutamate kinase family. ArgB subfamily.

It localises to the cytoplasm. It carries out the reaction N-acetyl-L-glutamate + ATP = N-acetyl-L-glutamyl 5-phosphate + ADP. It functions in the pathway amino-acid biosynthesis; L-arginine biosynthesis; N(2)-acetyl-L-ornithine from L-glutamate: step 2/4. Its function is as follows. Catalyzes the ATP-dependent phosphorylation of N-acetyl-L-glutamate. This chain is Acetylglutamate kinase, found in Burkholderia cenocepacia (strain HI2424).